Consider the following 171-residue polypeptide: Peptide deformylase 1 (171 aa).

Residues C99 and H141 each contribute to the Fe cation site. E142 is an active-site residue. H145 is a Fe cation binding site.

It belongs to the polypeptide deformylase family. The cofactor is Fe(2+).

The catalysed reaction is N-terminal N-formyl-L-methionyl-[peptide] + H2O = N-terminal L-methionyl-[peptide] + formate. In terms of biological role, removes the formyl group from the N-terminal Met of newly synthesized proteins. Requires at least a dipeptide for an efficient rate of reaction. N-terminal L-methionine is a prerequisite for activity but the enzyme has broad specificity at other positions. The protein is Peptide deformylase 1 of Xanthomonas campestris pv. campestris (strain ATCC 33913 / DSM 3586 / NCPPB 528 / LMG 568 / P 25).